The sequence spans 3132 residues: Enniatin synthetase (3132 aa).

The tract at residues 53 to 466 (ADDKQRAVGH…VEKVDMMTQE (414 aa)) is condensation 1. Residues 186 to 212 (NDEHPRQFETPDSSQATPEEDLQPNPS) are disordered. Positions 495–887 (SQSPNKAAVA…GRMDSQVKIR (393 aa)) are adenylation 1. The tract at residues 994–1013 (SQKTHSTPSQQSQAAISSGT) is disordered. A Carrier 1 domain is found at 1010–1086 (SSGTDTETKL…GLKAIVIGTS (77 aa)). At serine 1047 the chain carries O-(pantetheine 4'-phosphoryl)serine. Residues 1105-1534 (SYAQNRMWFL…ETCISVLPLT (430 aa)) are condensation 2. The interval 1563–1960 (FREQAAANPE…GRMDNQFKIR (398 aa)) is adenylation 2. An S-adenosyl-L-methionine-dependent N-methyltransferase region spans residues 2021–2177 (EGWQDHFESG…YLAEVIDGLI (157 aa)). 2 consecutive Carrier domains span residues 2504-2578 (FPIS…RQGL) and 2598-2672 (APRT…ESSH). Residues serine 2538 and serine 2632 each carry the O-(pantetheine 4'-phosphoryl)serine modification. The segment at 2719–3124 (QDVYPSTQMQ…RHVLEEVCKT (406 aa)) is condensation 3.

Belongs to the NRP synthetase family. Pantetheine 4'-phosphate serves as cofactor.

Its pathway is antibiotic biosynthesis; enniatin biosynthesis. In terms of biological role, nonribosomal peptide synthetase that synthesizes enniatin by coupling three D-hydroxycarboxylic acids and three L-amino acids via amide and ester bonds in an alternating fashion. Whereas ESYN1 can accept different amino acids as precursors (L-valine, L-isoleucine or L-leucine), only one species of D-hydroxycarboxylic acid can be found in natural enniatin isolates (D-hydroxyisovaleric acid, D-Hiv). D-Hiv stems from L-valine deanimation by a valine aminotransferase to 2-keto-isovaleric acid (2-Kiv), which becomes subsequently reduced by a keto-isovaleric acid reductase (KivR) to D-Hiv. In Fusarium oxysporum (Fusarium vascular wilt), this protein is Enniatin synthetase.